The following is a 745-amino-acid chain: UPF0508 protein YJR030C (745 aa).

Belongs to the UPF0508 family.

In Saccharomyces cerevisiae (strain ATCC 204508 / S288c) (Baker's yeast), this protein is UPF0508 protein YJR030C.